A 306-amino-acid chain; its full sequence is Aspartate carbamoyltransferase catalytic subunit (306 aa).

Residues R54 and T55 each coordinate carbamoyl phosphate. Position 83 (K83) interacts with L-aspartate. Positions 104, 132, and 135 each coordinate carbamoyl phosphate. L-aspartate-binding residues include R165 and R227. Residues L266 and P267 each contribute to the carbamoyl phosphate site.

Belongs to the aspartate/ornithine carbamoyltransferase superfamily. ATCase family. In terms of assembly, heterododecamer (2C3:3R2) of six catalytic PyrB chains organized as two trimers (C3), and six regulatory PyrI chains organized as three dimers (R2).

The enzyme catalyses carbamoyl phosphate + L-aspartate = N-carbamoyl-L-aspartate + phosphate + H(+). It participates in pyrimidine metabolism; UMP biosynthesis via de novo pathway; (S)-dihydroorotate from bicarbonate: step 2/3. Its function is as follows. Catalyzes the condensation of carbamoyl phosphate and aspartate to form carbamoyl aspartate and inorganic phosphate, the committed step in the de novo pyrimidine nucleotide biosynthesis pathway. In Clostridium kluyveri (strain NBRC 12016), this protein is Aspartate carbamoyltransferase catalytic subunit.